A 111-amino-acid polypeptide reads, in one-letter code: Protein BEX5 (111 aa).

Basic and acidic residues predominate over residues 1–12 (MENVPKENKVVE). The tract at residues 1 to 37 (MENVPKENKVVEKAPVQNEAPALGGGEYQEPGGNVKG) is disordered. The interval 100-104 (HHDHH) is his cluster. Cysteine 108 contacts Zn(2+).

The protein belongs to the BEX family. Ubiquitinated. Degraded by the proteasome.

The protein resides in the cytoplasm. The sequence is that of Protein BEX5 (BEX5) from Homo sapiens (Human).